Consider the following 383-residue polypeptide: tRNA-specific 2-thiouridylase MnmA (383 aa).

ATP is bound by residues 29-36 (GMSGGVDS) and M55. Positions 115–117 (NPD) are interaction with target base in tRNA. The active-site Nucleophile is C120. Cysteines 120 and 217 form a disulfide. G145 contacts ATP. The interaction with tRNA stretch occupies residues 167 to 169 (KDQ). C217 serves as the catalytic Cysteine persulfide intermediate. An interaction with tRNA region spans residues 329–330 (RY).

Belongs to the MnmA/TRMU family.

The protein localises to the cytoplasm. The enzyme catalyses S-sulfanyl-L-cysteinyl-[protein] + uridine(34) in tRNA + AH2 + ATP = 2-thiouridine(34) in tRNA + L-cysteinyl-[protein] + A + AMP + diphosphate + H(+). Catalyzes the 2-thiolation of uridine at the wobble position (U34) of tRNA, leading to the formation of s(2)U34. This Histophilus somni (strain 2336) (Haemophilus somnus) protein is tRNA-specific 2-thiouridylase MnmA.